Reading from the N-terminus, the 84-residue chain is Beta-defensin 119 (84 aa).

The signal sequence occupies residues 1–21 (MKLLYLFLAILLAIEEPVISG). 3 disulfides stabilise this stretch: Cys28–Cys55, Cys35–Cys49, and Cys39–Cys56.

Belongs to the beta-defensin family.

It is found in the secreted. Has antibacterial activity. The chain is Beta-defensin 119 (DEFB119) from Hylobates lar (Lar gibbon).